A 413-amino-acid chain; its full sequence is Protein arginine N-methyltransferase 2 (413 aa).

A disordered region spans residues 148–187 (LDGSDTEMGDKGGSARDVPASADSAPADSAGHSSSEPTAV). Residues 162–182 (ARDVPASADSAPADSAGHSSS) are compositionally biased toward low complexity. An RMT2 domain is found at 192–413 (TAAHQDTYLQ…HYYHPEISFQ (222 aa)). S-adenosyl-L-methionine is bound by residues Tyr-199, Met-229, 252–257 (FGMGII), 273–275 (EAH), 300–301 (WQ), and Asp-321.

It belongs to the class I-like SAM-binding methyltransferase superfamily. RMT2 methyltransferase family. Monomer.

It localises to the cytoplasm. The protein localises to the nucleus. S-adenosyl-L-methionine-dependent protein-arginine N-methyltransferase that methylates the delta-nitrogen atom of arginine residues to form N5-methylarginine (type IV) in target proteins. Monomethylates ribosomal protein L12. This Eremothecium gossypii (strain ATCC 10895 / CBS 109.51 / FGSC 9923 / NRRL Y-1056) (Yeast) protein is Protein arginine N-methyltransferase 2.